A 309-amino-acid chain; its full sequence is Methionyl-tRNA formyltransferase (309 aa).

109–112 is a (6S)-5,6,7,8-tetrahydrofolate binding site; the sequence is SLLP.

This sequence belongs to the Fmt family.

It carries out the reaction L-methionyl-tRNA(fMet) + (6R)-10-formyltetrahydrofolate = N-formyl-L-methionyl-tRNA(fMet) + (6S)-5,6,7,8-tetrahydrofolate + H(+). Functionally, attaches a formyl group to the free amino group of methionyl-tRNA(fMet). The formyl group appears to play a dual role in the initiator identity of N-formylmethionyl-tRNA by promoting its recognition by IF2 and preventing the misappropriation of this tRNA by the elongation apparatus. This chain is Methionyl-tRNA formyltransferase, found in Thiobacillus denitrificans (strain ATCC 25259 / T1).